Consider the following 1062-residue polypeptide: NACHT, LRR and PYD domains-containing protein 2 (1062 aa).

Residues 1–94 (MVSSAQMGFN…SERAKDEVRE (94 aa)) enclose the Pyrin domain. Positions 207-526 (YTVVLYGPAG…LEKEEEEDRD (320 aa)) constitute an NACHT domain. 213–220 (GPAGLGKT) is an ATP binding site. At Ser-671 the chain carries Phosphoserine. LRR repeat units follow at residues 812–832 (SLTC…KLLY), 841–861 (FLQR…KDLA), 869–889 (ELTH…KFLC), 898–918 (KLQT…CDLT), 926–946 (SLLC…KFLC), 955–976 (NLRC…DLCS), 983–1003 (SLVT…KMLF), and 1010–1033 (SGTL…LLEE).

Belongs to the NLRP family. As to quaternary structure, interacts with CHUK. Interacts with IKBKB. Interacts with IKBKG. Interacts with MEFV. Interacts with PYCARD. Interacts (via pyrin domain) with PYDC2. Interacts with CARD8. As to expression, expressed at high levels in lung, placenta and thymus and at lower levels in ovary, intestine and brain. Highly abundant in oocytes and early embryos, however poorly expressed in somatic tissues such as brain, kidney, liver and spinal cord.

It is found in the cytoplasm. In terms of biological role, suppresses TNF- and CD40-induced NFKB1 activity at the level of the IKK complex, by inhibiting NFKBIA degradation induced by TNF. When associated with PYCARD, activates CASP1, leading to the secretion of mature pro-inflammatory cytokine IL1B. May be a component of the inflammasome, a protein complex which also includes PYCARD, CARD8 and CASP1 and whose function would be the activation of pro-inflammatory caspases. In Homo sapiens (Human), this protein is NACHT, LRR and PYD domains-containing protein 2 (NLRP2).